The following is a 459-amino-acid chain: Ribulose bisphosphate carboxylase (459 aa).

Substrate is bound at residue N111. K166 (proton acceptor) is an active-site residue. K168 lines the substrate pocket. Mg(2+) contacts are provided by K191, D193, and E194. K191 is modified (N6-carboxylysine). The active-site Proton acceptor is H287. Substrate is bound by residues R288, H321, and S368.

This sequence belongs to the RuBisCO large chain family. Type II subfamily. Homodimer. The cofactor is Mg(2+).

It catalyses the reaction 2 (2R)-3-phosphoglycerate + 2 H(+) = D-ribulose 1,5-bisphosphate + CO2 + H2O. It carries out the reaction D-ribulose 1,5-bisphosphate + O2 = 2-phosphoglycolate + (2R)-3-phosphoglycerate + 2 H(+). Its function is as follows. RuBisCO catalyzes two reactions: the carboxylation of D-ribulose 1,5-bisphosphate, the primary event in carbon dioxide fixation, as well as the oxidative fragmentation of the pentose substrate. Both reactions occur simultaneously and in competition at the same active site. In Dechloromonas aromatica (strain RCB), this protein is Ribulose bisphosphate carboxylase.